The chain runs to 240 residues: Ribosomal RNA small subunit methyltransferase G (240 aa).

Residues glycine 80, phenylalanine 85, 131–132 (AE), and arginine 150 contribute to the S-adenosyl-L-methionine site.

Belongs to the methyltransferase superfamily. RNA methyltransferase RsmG family.

The protein localises to the cytoplasm. In terms of biological role, specifically methylates the N7 position of a guanine in 16S rRNA. This Dictyoglomus thermophilum (strain ATCC 35947 / DSM 3960 / H-6-12) protein is Ribosomal RNA small subunit methyltransferase G.